The following is an 87-amino-acid chain: Defensin-like protein 176 (87 aa).

An N-terminal signal peptide occupies residues 1 to 23 (MAKATSSLVVPIIFLVIFALVEQ). Disulfide bonds link Cys-27–Cys-66, Cys-36–Cys-55, Cys-39–Cys-60, and Cys-43–Cys-62.

Belongs to the DEFL family.

It is found in the secreted. This chain is Defensin-like protein 176 (LCR65), found in Arabidopsis thaliana (Mouse-ear cress).